The chain runs to 485 residues: Glutamate--tRNA ligase (485 aa).

Residues 11 to 21 (PSPTGHLHIGN) carry the 'HIGH' region motif. The 'KMSKS' region signature appears at 252-256 (KLSKR). An ATP-binding site is contributed by K255.

Belongs to the class-I aminoacyl-tRNA synthetase family. Glutamate--tRNA ligase type 1 subfamily. Monomer.

The protein localises to the cytoplasm. It carries out the reaction tRNA(Glu) + L-glutamate + ATP = L-glutamyl-tRNA(Glu) + AMP + diphosphate. In terms of biological role, catalyzes the attachment of glutamate to tRNA(Glu) in a two-step reaction: glutamate is first activated by ATP to form Glu-AMP and then transferred to the acceptor end of tRNA(Glu). The chain is Glutamate--tRNA ligase from Bacillus cytotoxicus (strain DSM 22905 / CIP 110041 / 391-98 / NVH 391-98).